The primary structure comprises 1116 residues: uncharacterized protein (1116 aa).

EF-hand domains follow at residues 8-43, 42-77, 166-201, and 292-327; these read EEQTAFDQLFKIADKQDIGVITGEEAVPFLEKSGLA, LAPQVLGQIWQIADAENRGFLTFSGFVIAMRLVALA, LSTEILARVWNLVDTHKRGALDIREFNTGMHIINLL, and LPEDVLAQIWDLSDTNSNGKLNIGEFCISLYLIKLK. EH domains lie at 9 to 106, 134 to 224, and 259 to 348; these read EQTA…DSSK, EMTR…AAST, and DLTS…VAPL. Positions 305, 307, 309, 311, and 316 each coordinate Ca(2+). Disordered stretches follow at residues 360 to 454, 703 to 774, 812 to 890, 909 to 978, 1004 to 1024, 1044 to 1066, and 1095 to 1116; these read PSVV…NSPT, SVNL…ASTV, TSLS…NTSA, PFAT…SPQI, TTTHVQHPNSETIPSSTENQY, SNEVSQPFDFDTANESDNDDDEL, and QAAEIKDDDNSSTDEEEHAGHH. Over residues 371–381 the composition is skewed to pro residues; that stretch reads NPNPTLAPNPT. Residues 401–416 are compositionally biased toward polar residues; that stretch reads FSPTLAPQHTSSNATK. Residues 565–707 are a coiled coil; it reads KAQTEQVNRE…EDGLKSVNLT (143 aa). Polar residues predominate over residues 723-749; that stretch reads SFTSNGITTDKPTLPDTTSSVPTQHNS. Low complexity-rich tracts occupy residues 755–774 and 812–827; these read NTLRSPSLNSNNSSAHASTV and TSLSVNNSSVNPSLDS. Positions 864–890 are enriched in polar residues; it reads SKLTGSARNTAEPVENTSAEPIENTSA. Over residues 957–969 the composition is skewed to acidic residues; sequence EIDDDESSSDEEP. Composition is skewed to acidic residues over residues 1055–1066 and 1104–1116; these read TANESDNDDDEL and NSSTDEEEHAGHH.

It localises to the cytoplasm. The protein resides in the cytoskeleton. This is an uncharacterized protein from Schizosaccharomyces pombe (strain 972 / ATCC 24843) (Fission yeast).